The chain runs to 1168 residues: TBC1 domain family member 1 (1168 aa).

Serine 146 carries the post-translational modification Phosphoserine. The tract at residues 203-238 (VSGSRGSESPRPNPPHAAPTGSQEPVRRPMRKSFSQ) is disordered. Serine 235 bears the Phosphoserine; by PKB/AKT1 mark. Serine 237 is subject to Phosphoserine. Positions 246 to 404 (FRKELQDGGL…LHKLCERIEG (159 aa)) constitute a PID domain. Phosphoserine is present on serine 503. Threonine 505 carries the post-translational modification Phosphothreonine; by PKB/AKT1. Serine 507, serine 525, and serine 527 each carry phosphoserine. Residues 532 to 542 (SSLSSTLSNTS) are compositionally biased toward low complexity. 2 disordered regions span residues 532–551 (SSLSSTLSNTSKEPSVCEKE) and 564–587 (GSSEDLSSDSESHLPEEPAPLSPQ). Phosphoserine occurs at positions 565, 566, 570, 571, and 585. Threonine 596 bears the Phosphothreonine mark. Serine 614 bears the Phosphoserine mark. Serine 627 carries the post-translational modification Phosphoserine; by PKB/AKT1. Disordered regions lie at residues 628-658 (VSTETPHERKDFESKANHLGDSGGTPVKTRR) and 678-717 (SSSRYEDYSELGELPPRSPLEPVCEDGPFGPPPEEKKRTS). The span at 632–645 (TPHERKDFESKANH) shows a compositional bias: basic and acidic residues. Phosphoserine is present on residues serine 695 and serine 941. Positions 800–994 (GVPRHHRGEI…RVFDMIFLQG (195 aa)) constitute a Rab-GAP TBC domain. Phosphotyrosine is present on tyrosine 952. Threonine 1131 carries the phosphothreonine modification. The segment covering 1145–1159 (ELRRRSAEPSDREPE) has biased composition (basic and acidic residues). The tract at residues 1145–1168 (ELRRRSAEPSDREPECTQPEPTGD) is disordered.

In terms of assembly, interacts with APPL2 (via BAR domain); interaction is dependent of TBC1D1 phosphorylation at Ser-235; interaction diminishes the phosphorylation of TBC1D1 at Thr-596, resulting in inhibition of SLC2A4/GLUT4 translocation and glucose uptake. Insulin-stimulated phosphorylation by AKT family kinases stimulates SLC2A4/GLUT4 translocation.

It is found in the nucleus. Its function is as follows. May act as a GTPase-activating protein for Rab family protein(s). May play a role in the cell cycle and differentiation of various tissues. Involved in the trafficking and translocation of GLUT4-containing vesicles and insulin-stimulated glucose uptake into cells. In Homo sapiens (Human), this protein is TBC1 domain family member 1 (TBC1D1).